The following is a 101-amino-acid chain: uncharacterized protein (101 aa).

In terms of biological role, may regulate the expression of phage structural components with protein P13. This is an uncharacterized protein from Pseudoalteromonas phage PM2 (Bacteriophage PM2).